Here is a 156-residue protein sequence, read N- to C-terminus: 6,7-dimethyl-8-ribityllumazine synthase (156 aa).

5-amino-6-(D-ribitylamino)uracil is bound by residues F22, 57–59 (AYE), and 81–83 (TVI). A (2S)-2-hydroxy-3-oxobutyl phosphate-binding site is contributed by 86–87 (GT). Residue H89 is the Proton donor of the active site. F114 contacts 5-amino-6-(D-ribitylamino)uracil. R128 is a binding site for (2S)-2-hydroxy-3-oxobutyl phosphate.

This sequence belongs to the DMRL synthase family. As to quaternary structure, forms an icosahedral capsid composed of 60 subunits, arranged as a dodecamer of pentamers.

It carries out the reaction (2S)-2-hydroxy-3-oxobutyl phosphate + 5-amino-6-(D-ribitylamino)uracil = 6,7-dimethyl-8-(1-D-ribityl)lumazine + phosphate + 2 H2O + H(+). Its pathway is cofactor biosynthesis; riboflavin biosynthesis; riboflavin from 2-hydroxy-3-oxobutyl phosphate and 5-amino-6-(D-ribitylamino)uracil: step 1/2. Functionally, catalyzes the formation of 6,7-dimethyl-8-ribityllumazine by condensation of 5-amino-6-(D-ribitylamino)uracil with 3,4-dihydroxy-2-butanone 4-phosphate. This is the penultimate step in the biosynthesis of riboflavin. The polypeptide is 6,7-dimethyl-8-ribityllumazine synthase (Edwardsiella ictaluri (strain 93-146)).